The primary structure comprises 77 residues: Small ribosomal subunit protein uS17 (77 aa).

This sequence belongs to the universal ribosomal protein uS17 family. As to quaternary structure, part of the 30S ribosomal subunit.

One of the primary rRNA binding proteins, it binds specifically to the 5'-end of 16S ribosomal RNA. This is Small ribosomal subunit protein uS17 from Anaplasma marginale (strain St. Maries).